A 596-amino-acid chain; its full sequence is DNA mismatch repair protein MutL (596 aa).

This sequence belongs to the DNA mismatch repair MutL/HexB family.

This protein is involved in the repair of mismatches in DNA. It is required for dam-dependent methyl-directed DNA mismatch repair. May act as a 'molecular matchmaker', a protein that promotes the formation of a stable complex between two or more DNA-binding proteins in an ATP-dependent manner without itself being part of a final effector complex. In Leptospira borgpetersenii serovar Hardjo-bovis (strain L550), this protein is DNA mismatch repair protein MutL.